The chain runs to 243 residues: Large ribosomal subunit protein uL3 (243 aa).

Disordered stretches follow at residues 139–164 (VSHR…KMPG) and 218–243 (KPGK…QEGV). Q151 carries the post-translational modification N5-methylglutamine. A compositionally biased stretch (low complexity) spans 231-243 (QTAAAPAAEQEGV).

Belongs to the universal ribosomal protein uL3 family. As to quaternary structure, part of the 50S ribosomal subunit. Forms a cluster with proteins L14 and L19. Methylated by PrmB.

One of the primary rRNA binding proteins, it binds directly near the 3'-end of the 23S rRNA, where it nucleates assembly of the 50S subunit. The sequence is that of Large ribosomal subunit protein uL3 from Rhodopseudomonas palustris (strain BisB18).